We begin with the raw amino-acid sequence, 415 residues long: Gamma-glutamyl phosphate reductase (415 aa).

The protein belongs to the gamma-glutamyl phosphate reductase family.

Its subcellular location is the cytoplasm. It carries out the reaction L-glutamate 5-semialdehyde + phosphate + NADP(+) = L-glutamyl 5-phosphate + NADPH + H(+). It participates in amino-acid biosynthesis; L-proline biosynthesis; L-glutamate 5-semialdehyde from L-glutamate: step 2/2. In terms of biological role, catalyzes the NADPH-dependent reduction of L-glutamate 5-phosphate into L-glutamate 5-semialdehyde and phosphate. The product spontaneously undergoes cyclization to form 1-pyrroline-5-carboxylate. The sequence is that of Gamma-glutamyl phosphate reductase from Dictyoglomus thermophilum (strain ATCC 35947 / DSM 3960 / H-6-12).